Reading from the N-terminus, the 199-residue chain is Protein-methionine-sulfoxide reductase heme-binding subunit MsrQ (199 aa).

5 helical membrane-spanning segments follow: residues isoleucine 8 to tryptophan 28, leucine 82 to isoleucine 102, proline 116 to threonine 136, phenylalanine 149 to valine 169, and isoleucine 171 to tyrosine 191.

The protein belongs to the MsrQ family. In terms of assembly, heterodimer of a catalytic subunit (MsrP) and a heme-binding subunit (MsrQ). FMN is required as a cofactor. Requires heme b as cofactor.

The protein resides in the cell inner membrane. Functionally, part of the MsrPQ system that repairs oxidized periplasmic proteins containing methionine sulfoxide residues (Met-O), using respiratory chain electrons. Thus protects these proteins from oxidative-stress damage caused by reactive species of oxygen and chlorine generated by the host defense mechanisms. MsrPQ is essential for the maintenance of envelope integrity under bleach stress, rescuing a wide series of structurally unrelated periplasmic proteins from methionine oxidation. MsrQ provides electrons for reduction to the reductase catalytic subunit MsrP, using the quinone pool of the respiratory chain. The sequence is that of Protein-methionine-sulfoxide reductase heme-binding subunit MsrQ from Enterobacter sp. (strain 638).